We begin with the raw amino-acid sequence, 846 residues long: DNA mismatch repair protein MutS (846 aa).

ATP is bound at residue glycine 610–serine 617.

It belongs to the DNA mismatch repair MutS family.

Its function is as follows. This protein is involved in the repair of mismatches in DNA. It is possible that it carries out the mismatch recognition step. This protein has a weak ATPase activity. This chain is DNA mismatch repair protein MutS, found in Legionella pneumophila (strain Corby).